The chain runs to 132 residues: MVTNTSGKKKTAVARATVSDGEGRVRINSQPVELVEPEMARLKMLEPFRISGSDLRGDVDIDIDVAGGGFAGQADAVRTAIARGLVEHYGDAELRDAFREFDRSLLVNDVRQRESKKWGGPGARARYQKSYR.

It belongs to the universal ribosomal protein uS9 family.

The polypeptide is Small ribosomal subunit protein uS9 (rps9) (Halobacterium salinarum (strain ATCC 700922 / JCM 11081 / NRC-1) (Halobacterium halobium)).